The following is a 266-amino-acid chain: Imidazole glycerol phosphate synthase subunit HisF (266 aa).

Residues aspartate 11 and aspartate 130 contribute to the active site.

This sequence belongs to the HisA/HisF family. Heterodimer of HisH and HisF.

The protein localises to the cytoplasm. The enzyme catalyses 5-[(5-phospho-1-deoxy-D-ribulos-1-ylimino)methylamino]-1-(5-phospho-beta-D-ribosyl)imidazole-4-carboxamide + L-glutamine = D-erythro-1-(imidazol-4-yl)glycerol 3-phosphate + 5-amino-1-(5-phospho-beta-D-ribosyl)imidazole-4-carboxamide + L-glutamate + H(+). It functions in the pathway amino-acid biosynthesis; L-histidine biosynthesis; L-histidine from 5-phospho-alpha-D-ribose 1-diphosphate: step 5/9. Functionally, IGPS catalyzes the conversion of PRFAR and glutamine to IGP, AICAR and glutamate. The HisF subunit catalyzes the cyclization activity that produces IGP and AICAR from PRFAR using the ammonia provided by the HisH subunit. The protein is Imidazole glycerol phosphate synthase subunit HisF of Delftia acidovorans (strain DSM 14801 / SPH-1).